A 360-amino-acid chain; its full sequence is DNA integrity scanning protein DisA (360 aa).

Residues 9 to 147 enclose the DAC domain; sequence DNDLMDILNI…NNIKYVLRDS (139 aa). ATP-binding positions include G76, L94, and 107–111; that span reads TRHRT.

Belongs to the DisA family. In terms of assembly, homooctamer. Mg(2+) is required as a cofactor.

It catalyses the reaction 2 ATP = 3',3'-c-di-AMP + 2 diphosphate. Participates in a DNA-damage check-point that is active prior to asymmetric division when DNA is damaged. DisA forms globular foci that rapidly scan along the chromosomes during sporulation, searching for lesions. When a lesion is present, DisA pauses at the lesion site. This triggers a cellular response that culminates in a temporary block in sporulation initiation. In terms of biological role, also has diadenylate cyclase activity, catalyzing the condensation of 2 ATP molecules into cyclic di-AMP (c-di-AMP). c-di-AMP acts as a signaling molecule that couples DNA integrity with progression of sporulation. The rise in c-di-AMP level generated by DisA while scanning the chromosome, operates as a positive signal that advances sporulation; upon encountering a lesion, the DisA focus arrests at the damaged site and halts c-di-AMP synthesis. This Clostridium tetani (strain Massachusetts / E88) protein is DNA integrity scanning protein DisA.